The following is a 1158-amino-acid chain: ATP-dependent helicase/deoxyribonuclease subunit B (1158 aa).

The UvrD-like helicase ATP-binding domain occupies 1-275 (MTLHAYLGRA…QYFNQLYRFN (275 aa)). ATP is bound at residue 8 to 15 (GRAGTGKS). Residues 269–583 (NQLYRFNNQD…SIGTMDLAKV (315 aa)) form the UvrD-like helicase C-terminal domain. Residues Cys-784, Cys-1112, Cys-1115, and Cys-1121 each contribute to the [4Fe-4S] cluster site.

It belongs to the helicase family. AddB/RexB type 1 subfamily. In terms of assembly, heterodimer of AddA and AddB. It depends on Mg(2+) as a cofactor. [4Fe-4S] cluster is required as a cofactor.

The heterodimer acts as both an ATP-dependent DNA helicase and an ATP-dependent, dual-direction single-stranded exonuclease. Recognizes the chi site generating a DNA molecule suitable for the initiation of homologous recombination. The AddB subunit has 5' -&gt; 3' nuclease activity but not helicase activity. The chain is ATP-dependent helicase/deoxyribonuclease subunit B from Staphylococcus aureus (strain MSSA476).